The sequence spans 342 residues: S-adenosylmethionine:tRNA ribosyltransferase-isomerase (342 aa).

This sequence belongs to the QueA family. As to quaternary structure, monomer.

The protein localises to the cytoplasm. The catalysed reaction is 7-aminomethyl-7-carbaguanosine(34) in tRNA + S-adenosyl-L-methionine = epoxyqueuosine(34) in tRNA + adenine + L-methionine + 2 H(+). The protein operates within tRNA modification; tRNA-queuosine biosynthesis. Its function is as follows. Transfers and isomerizes the ribose moiety from AdoMet to the 7-aminomethyl group of 7-deazaguanine (preQ1-tRNA) to give epoxyqueuosine (oQ-tRNA). The polypeptide is S-adenosylmethionine:tRNA ribosyltransferase-isomerase (Streptococcus pyogenes serotype M3 (strain ATCC BAA-595 / MGAS315)).